Here is a 438-residue protein sequence, read N- to C-terminus: MTPAFRRADLTGFLRTYGAALILLLAAMLAWQPAQAQLRVDISGTGATQYPVAIADFAVDDTHGRALAEVIRADLTRTGQFRLINAAGSGLNVDSQVAHDDWRAKGADFLAYGSITRGPDGRYDVRYRLADTVKKGQLDGVAFSGTEQELRRVAHQIADRIYEKITGVRGVFSTRIAYVLKRGSTYELQVADADGQNPQVALRSREPIISPSWSPDGSRLAYVSFESGKPVVYVHTLATSARIPVANFKGNNSAPAWSPDGSQLAVALTRDGLSQIYIVSAGGGSNMRRITRSPGIDTEPNFTPDGRSIIFTSDRSGGPQIYQTGLDGGDARRLTFNGGYNISPRISPDGSTLLYVARRDGAFRIASLNLSSGSETLLTDGRDDQSPSFAPNGMQVLYAAIQNGRSVLAGVSSDGRVRQTLSVLNGEIREPTWGPFTR.

Positions 1–36 are cleaved as a signal peptide; sequence MTPAFRRADLTGFLRTYGAALILLLAAMLAWQPAQA.

It belongs to the TolB family. As to quaternary structure, the Tol-Pal system is composed of five core proteins: the inner membrane proteins TolA, TolQ and TolR, the periplasmic protein TolB and the outer membrane protein Pal. They form a network linking the inner and outer membranes and the peptidoglycan layer.

The protein localises to the periplasm. In terms of biological role, part of the Tol-Pal system, which plays a role in outer membrane invagination during cell division and is important for maintaining outer membrane integrity. The protein is Tol-Pal system protein TolB of Bordetella pertussis (strain Tohama I / ATCC BAA-589 / NCTC 13251).